Consider the following 258-residue polypeptide: Imidazole glycerol phosphate synthase subunit HisF (258 aa).

Residues Asp-11 and Asp-130 contribute to the active site.

It belongs to the HisA/HisF family. As to quaternary structure, heterodimer of HisH and HisF.

It localises to the cytoplasm. It catalyses the reaction 5-[(5-phospho-1-deoxy-D-ribulos-1-ylimino)methylamino]-1-(5-phospho-beta-D-ribosyl)imidazole-4-carboxamide + L-glutamine = D-erythro-1-(imidazol-4-yl)glycerol 3-phosphate + 5-amino-1-(5-phospho-beta-D-ribosyl)imidazole-4-carboxamide + L-glutamate + H(+). Its pathway is amino-acid biosynthesis; L-histidine biosynthesis; L-histidine from 5-phospho-alpha-D-ribose 1-diphosphate: step 5/9. In terms of biological role, IGPS catalyzes the conversion of PRFAR and glutamine to IGP, AICAR and glutamate. The HisF subunit catalyzes the cyclization activity that produces IGP and AICAR from PRFAR using the ammonia provided by the HisH subunit. In Roseiflexus sp. (strain RS-1), this protein is Imidazole glycerol phosphate synthase subunit HisF.